Reading from the N-terminus, the 341-residue chain is D-erythrose-4-phosphate dehydrogenase (341 aa).

Residue R12 to I13 participates in NAD(+) binding. Residues S154–T156, R200, T213–K214, and R236 contribute to the substrate site. C155 serves as the catalytic Nucleophile. An NAD(+)-binding site is contributed by N318.

Belongs to the glyceraldehyde-3-phosphate dehydrogenase family. Epd subfamily. Homotetramer.

It localises to the cytoplasm. The enzyme catalyses D-erythrose 4-phosphate + NAD(+) + H2O = 4-phospho-D-erythronate + NADH + 2 H(+). It participates in cofactor biosynthesis; pyridoxine 5'-phosphate biosynthesis; pyridoxine 5'-phosphate from D-erythrose 4-phosphate: step 1/5. In terms of biological role, catalyzes the NAD-dependent conversion of D-erythrose 4-phosphate to 4-phosphoerythronate. This is D-erythrose-4-phosphate dehydrogenase from Edwardsiella ictaluri (strain 93-146).